The chain runs to 615 residues: MNKKPTRNKKPVDQRSKINIKSYLKEVQVGVKDGVFIYTDPLSIDQFAKKVNQPVAKIIKHFFSKGINTINLNTILSLEQIGELCLDLGLDFKIEKSVTSENLLDNIEFKDKKEDLVKRPPIVTVMGHVDHGKTSLLDAIRSTNVTSNEAGGITQHIGAYQVKKNDELITFIDTPGHEAFTEMRARGANLTDIVVLVVAGDDGIKPQTEEAIDHAKNANVPIIVFVNKMDKSGANFDRVIQQISKYDLSPEEYGGDTIFVQGSAIKKEGINELLDAILTLAEINEYKANPNADPYGIVIESKLEPGLGPQATVIIKRGTLKVGDYICIGAAYGKVRIMQDENGNNLTEATPSRPVKISGLDAIPQAGEKFLGLATEKEVKELSDSYKLKQQKQKHLSLQESHEKRTRINTNGIKCVDLIIKSDVQGSLEAIKYAISNINIEGVTTNIIRASTGVISETDIKLAQASNSTVISFNLGVSKQIRDLANSDNVQILSYEIIYKMVEDLEKIMKGELDPVYEESVIGQAVVRVLWKHSKIGTIAGSYVTSGKVVKNALCRVLRDDVIIYKSKIASLKSKTTFVDKVEHNKECGIVVENYNDIKEDDIIEVYEIVKKRVY.

The tr-type G domain occupies 118–285 (KRPPIVTVMG…AILTLAEINE (168 aa)). Positions 127–134 (GHVDHGKT) are G1. Position 127-134 (127-134 (GHVDHGKT)) interacts with GTP. Positions 152 to 156 (GITQH) are G2. Residues 173 to 176 (DTPG) are G3. Residues 173–177 (DTPGH) and 227–230 (NKMD) each bind GTP. The G4 stretch occupies residues 227–230 (NKMD). The tract at residues 263 to 265 (SAI) is G5.

Belongs to the TRAFAC class translation factor GTPase superfamily. Classic translation factor GTPase family. IF-2 subfamily.

Its subcellular location is the cytoplasm. Functionally, one of the essential components for the initiation of protein synthesis. Protects formylmethionyl-tRNA from spontaneous hydrolysis and promotes its binding to the 30S ribosomal subunits. Also involved in the hydrolysis of GTP during the formation of the 70S ribosomal complex. The sequence is that of Translation initiation factor IF-2 from Mycoplasmoides gallisepticum (strain R(low / passage 15 / clone 2)) (Mycoplasma gallisepticum).